The sequence spans 69 residues: Antimicrobial peptide ISAMP (69 aa).

An N-terminal signal peptide occupies residues 1–23 (MRAVAIFIVTLLVLECVYFVMSE).

In terms of tissue distribution, expressed in the fat body, hemocytes and salivary glands of partially-fed female ticks. Not expressed in the midgut.

Its subcellular location is the secreted. Has antimicrobial activity against B.cereus (MIC=5.8 ug/ml), B.subtilis (MIC=12.3 ug/ml), S.aureus (MIC=10.4 ug/ml), E.coli Edl 933 (MIC=3.2 ug/ml) and E.coli MG/655 (MIC=4.2 ug/ml). Non-hemolytic. The sequence is that of Antimicrobial peptide ISAMP from Ixodes scapularis (Black-legged tick).